A 499-amino-acid polypeptide reads, in one-letter code: Glutamate--tRNA ligase (499 aa).

The 'HIGH' region signature appears at 12 to 22 (PSPTGHLHIGN). Residues 259-263 (KLSKR) carry the 'KMSKS' region motif. Residue K262 participates in ATP binding.

It belongs to the class-I aminoacyl-tRNA synthetase family. Glutamate--tRNA ligase type 1 subfamily. In terms of assembly, monomer.

It localises to the cytoplasm. It carries out the reaction tRNA(Glu) + L-glutamate + ATP = L-glutamyl-tRNA(Glu) + AMP + diphosphate. Functionally, catalyzes the attachment of glutamate to tRNA(Glu) in a two-step reaction: glutamate is first activated by ATP to form Glu-AMP and then transferred to the acceptor end of tRNA(Glu). The chain is Glutamate--tRNA ligase from Lactobacillus johnsonii (strain CNCM I-12250 / La1 / NCC 533).